A 66-amino-acid chain; its full sequence is Cold shock-like protein CspD (66 aa).

Positions glycine 4–valine 63 constitute a CSD domain.

In terms of assembly, homodimer.

Its subcellular location is the cytoplasm. This is Cold shock-like protein CspD (cspD) from Bacillus anthracis.